The chain runs to 565 residues: Arginine--tRNA ligase (565 aa).

The short motif at 126 to 136 (ANPTGPLHIGH) is the 'HIGH' region element.

It belongs to the class-I aminoacyl-tRNA synthetase family. As to quaternary structure, monomer.

It localises to the cytoplasm. The catalysed reaction is tRNA(Arg) + L-arginine + ATP = L-arginyl-tRNA(Arg) + AMP + diphosphate. This Wolbachia sp. subsp. Brugia malayi (strain TRS) protein is Arginine--tRNA ligase.